Reading from the N-terminus, the 295-residue chain is HTH-type transcriptional regulator TrpI (295 aa).

The HTH lysR-type domain maps to 6 to 63 (PSLNALRAFEAAARLHSISLAAEELHVTHGAVSRQVRLLEDDLGVALFGKDGRGVKLT). Residues 23–42 (ISLAAEELHVTHGAVSRQVR) constitute a DNA-binding region (H-T-H motif).

It belongs to the LysR transcriptional regulatory family. In terms of assembly, homotetramer.

In terms of biological role, activates the expression of the trpBA genes, which encode the two tryptophan synthase subunits, and represses initiation at its own promoter. Acts by binding to two adjacent sites in the intergenic region. In the absence of the inducer indoleglycerol phosphate (InGP), TrpI binds to site I. In the presence of InGP, TrpI binds to site I and site II. Binding to site II is site I dependent. InGP strongly stimulates binding to site II and is required for maximal activation of trpBA. This Pseudomonas aeruginosa (strain ATCC 15692 / DSM 22644 / CIP 104116 / JCM 14847 / LMG 12228 / 1C / PRS 101 / PAO1) protein is HTH-type transcriptional regulator TrpI.